We begin with the raw amino-acid sequence, 415 residues long: Serine--tRNA ligase (415 aa).

231-233 (TAE) is a binding site for L-serine. 262–264 (RSE) is a binding site for ATP. Glu285 is a binding site for L-serine. Residue 349-352 (EISS) coordinates ATP. An L-serine-binding site is contributed by Ser383.

The protein belongs to the class-II aminoacyl-tRNA synthetase family. Type-1 seryl-tRNA synthetase subfamily. In terms of assembly, homodimer. The tRNA molecule binds across the dimer.

It localises to the cytoplasm. It carries out the reaction tRNA(Ser) + L-serine + ATP = L-seryl-tRNA(Ser) + AMP + diphosphate + H(+). The catalysed reaction is tRNA(Sec) + L-serine + ATP = L-seryl-tRNA(Sec) + AMP + diphosphate + H(+). It participates in aminoacyl-tRNA biosynthesis; selenocysteinyl-tRNA(Sec) biosynthesis; L-seryl-tRNA(Sec) from L-serine and tRNA(Sec): step 1/1. Functionally, catalyzes the attachment of serine to tRNA(Ser). Is also able to aminoacylate tRNA(Sec) with serine, to form the misacylated tRNA L-seryl-tRNA(Sec), which will be further converted into selenocysteinyl-tRNA(Sec). This chain is Serine--tRNA ligase, found in Helicobacter pylori (strain ATCC 700392 / 26695) (Campylobacter pylori).